The primary structure comprises 83 residues: Small ribosomal subunit protein eS21 (83 aa).

This sequence belongs to the eukaryotic ribosomal protein eS21 family. As to quaternary structure, component of the 40S small ribosomal subunit.

It is found in the cytoplasm. The protein localises to the cytosol. Its subcellular location is the rough endoplasmic reticulum. The chain is Small ribosomal subunit protein eS21 (RpS21) from Ixodes scapularis (Black-legged tick).